Here is a 151-residue protein sequence, read N- to C-terminus: Ribosome maturation factor RimP (151 aa).

The protein belongs to the RimP family.

Its subcellular location is the cytoplasm. Required for maturation of 30S ribosomal subunits. The sequence is that of Ribosome maturation factor RimP from Caldicellulosiruptor saccharolyticus (strain ATCC 43494 / DSM 8903 / Tp8T 6331).